Reading from the N-terminus, the 108-residue chain is Beta-defensin 126 (108 aa).

A signal peptide spans 1–20 (MKSLLFTLAVFMLLAQLVSG). The in vitro binds to LPS, mediates antimicrobial activity and inhibits LPS-mediated inflammation stretch occupies residues 21 to 63 (NWYVKKCLNDVGICKKKCKPGEMHIKNGWATCGKQRDCCVPAD). Disulfide bonds link Cys27/Cys58, Cys34/Cys52, and Cys38/Cys59.

Belongs to the beta-defensin family. As to quaternary structure, homodimer or homooligomer; disulfide-linked. Post-translationally, O-glycosylated; glycans contain alpha(2,3)-linked sialic acids.

It localises to the secreted. Functionally, highly glycosylated atypical beta-defensin involved in several aspects of sperm function. Facilitates sperm transport in the female reproductive tract and contributes to sperm protection against immunodetection; both functions are probably implicating the negative surface charge provided by its O-linked oligosaccharides in the sperm glycocalyx. Involved in binding of sperm to oviductal epithelial cells to form a sperm reservoir until ovulation. Release from the sperm surface during capacitation and ovaluation by an elevation of oviductal fluid pH is unmasking other surface components and allows sperm to penetrate the cumulus matrix and bind to the zona pellucida of the oocyte. In vitro has antimicrobial activity and may inhibit LPS-mediated inflammation. The sequence is that of Beta-defensin 126 (DEFB126) from Pan troglodytes (Chimpanzee).